A 790-amino-acid chain; its full sequence is Nuclear cap-binding protein subunit 1 (790 aa).

The disordered stretch occupies residues 1 to 26; it reads MSRRRHSYENDGGQPHKRRKTSDANE. Residues 3–20 carry the Nuclear localization signal motif; sequence RRRHSYENDGGQPHKRRK. Ser7 carries the post-translational modification Phosphoserine. Thr21 carries the phosphothreonine modification. Ser22 and Ser201 each carry phosphoserine. The MIF4G domain maps to 28-240; sequence EDHLESLICK…CLWAQIQKLK (213 aa). Lys204 carries the N6-acetyllysine modification. Positions 643–713 form a coiled coil; that stretch reads STIRKMNKHV…SEQKNLFLVI (71 aa). The interval 666 to 685 is disordered; the sequence is LARQHKRRSDDDDRSSDRKD. Residue Lys684 forms a Glycyl lysine isopeptide (Lys-Gly) (interchain with G-Cter in SUMO2) linkage. The residue at position 698 (Lys698) is an N6-acetyllysine.

The protein belongs to the NCBP1 family. In terms of assembly, component of the nuclear cap-binding complex (CBC), a heterodimer composed of NCBP1/CBP80 and NCBP2/CBP20 that interacts with m7GpppG-capped RNA. Found in a U snRNA export complex containing PHAX/RNUXA, NCBP1/CBP80, NCBP2/CBP20, RAN, XPO1 and m7G-capped RNA. Identified in a IGF2BP1-dependent mRNP granule complex containing untranslated mRNAs. Interacts with PHAX/RNUXA, SRRT/ARS2, EIF4G2, IGF2BP1, HNRNPF, HNRNPH1, KIAA0427/CTIF, PARN, DROSHA, UPF1 and ALYREF/THOC4. May interact with EIF4G1; the interaction is however controversial. The large PER complex involved in the repression of transcriptional termination is composed of at least PER2, CDK9, DDX5, DHX9, NCBP1/CBP80 and POLR2A (active). Component of an alternative nuclear cap-binding complex (CBC) composed of NCBP1/CBP80 and NCBP3. Interacts with METTL3. Interacts with ZFC3H1 in a RNase-insensitive manner. Interacts with MTREX. Interacts with TASOR. Interacts with DHX34; the interaction is RNA-dependent. Interacts with KPNA3. In terms of processing, dephosphorylated at Thr-21 by the PNUTS-PP1 complex during RNA polymerase II transcription pause-release. As to expression, expressed in the spermatogonia, spermatocytes and granular cells within the cerebellum.

It is found in the nucleus. The protein resides in the cytoplasm. Component of the cap-binding complex (CBC), which binds cotranscriptionally to the 5'-cap of pre-mRNAs and is involved in various processes such as pre-mRNA splicing, translation regulation, nonsense-mediated mRNA decay, RNA-mediated gene silencing (RNAi) by microRNAs (miRNAs) and mRNA export. The CBC complex is involved in mRNA export from the nucleus via its interaction with ALYREF/THOC4/ALY, leading to the recruitment of the mRNA export machinery to the 5'-end of mRNA and to mRNA export in a 5' to 3' direction through the nuclear pore. The CBC complex is also involved in mediating U snRNA and intronless mRNAs export from the nucleus. The CBC complex is essential for a pioneer round of mRNA translation, before steady state translation when the CBC complex is replaced by cytoplasmic cap-binding protein eIF4E. The pioneer round of mRNA translation mediated by the CBC complex plays a central role in nonsense-mediated mRNA decay (NMD), NMD only taking place in mRNAs bound to the CBC complex, but not on eIF4E-bound mRNAs. The CBC complex enhances NMD in mRNAs containing at least one exon-junction complex (EJC) via its interaction with UPF1, promoting the interaction between UPF1 and UPF2. The CBC complex is also involved in 'failsafe' NMD, which is independent of the EJC complex, while it does not participate in Staufen-mediated mRNA decay (SMD). During cell proliferation, the CBC complex is also involved in microRNAs (miRNAs) biogenesis via its interaction with SRRT/ARS2 and is required for miRNA-mediated RNA interference. The CBC complex also acts as a negative regulator of PARN, thereby acting as an inhibitor of mRNA deadenylation. In the CBC complex, NCBP1/CBP80 does not bind directly capped RNAs (m7GpppG-capped RNA) but is required to stabilize the movement of the N-terminal loop of NCBP2/CBP20 and lock the CBC into a high affinity cap-binding state with the cap structure. Associates with NCBP3 to form an alternative cap-binding complex (CBC) which plays a key role in mRNA export and is particularly important in cellular stress situations such as virus infections. The conventional CBC with NCBP2 binds both small nuclear RNA (snRNA) and messenger (mRNA) and is involved in their export from the nucleus whereas the alternative CBC with NCBP3 does not bind snRNA and associates only with mRNA thereby playing a role only in mRNA export. NCBP1/CBP80 is required for cell growth and viability. This chain is Nuclear cap-binding protein subunit 1 (Ncbp1), found in Mus musculus (Mouse).